The primary structure comprises 671 residues: DNA ligase (671 aa).

NAD(+) contacts are provided by residues 32-36 (DAEYD), 81-82 (SL), and E113. The active-site N6-AMP-lysine intermediate is K115. Residues R136, E173, K290, and K314 each coordinate NAD(+). Residues C408, C411, C426, and C432 each coordinate Zn(2+). The region spanning 593 to 671 (EIDSPFAGKT…EAEMIRLLGA (79 aa)) is the BRCT domain.

This sequence belongs to the NAD-dependent DNA ligase family. LigA subfamily. It depends on Mg(2+) as a cofactor. The cofactor is Mn(2+).

It catalyses the reaction NAD(+) + (deoxyribonucleotide)n-3'-hydroxyl + 5'-phospho-(deoxyribonucleotide)m = (deoxyribonucleotide)n+m + AMP + beta-nicotinamide D-nucleotide.. Functionally, DNA ligase that catalyzes the formation of phosphodiester linkages between 5'-phosphoryl and 3'-hydroxyl groups in double-stranded DNA using NAD as a coenzyme and as the energy source for the reaction. It is essential for DNA replication and repair of damaged DNA. The sequence is that of DNA ligase from Salmonella heidelberg (strain SL476).